Consider the following 177-residue polypeptide: Protein Flattop (177 aa).

A disordered region spans residues Ile113–Ser177. The segment covering Gly115 to Lys124 has biased composition (basic and acidic residues). The span at Thr132–Pro163 shows a compositional bias: polar residues.

This sequence belongs to the Flattop family. As to quaternary structure, microtubule inner protein component of sperm flagellar doublet microtubules. Interacts with DLG3. In terms of tissue distribution, expressed in airway epithelial cells.

The protein localises to the cytoplasm. Its subcellular location is the cytoskeleton. It localises to the cilium basal body. The protein resides in the cell projection. It is found in the cilium. The protein localises to the apical cell membrane. Its subcellular location is the cilium axoneme. It localises to the flagellum axoneme. In terms of biological role, microtubule inner protein (MIP) part of the dynein-decorated doublet microtubules (DMTs) in cilia axoneme. Acts as a regulator of cilium basal body docking and positioning in mono- and multiciliated cells. Regulates basal body docking and cilia formation in multiciliated lung cells. Regulates kinocilium positioning and stereocilia bundle morphogenesis in the inner ear. The sequence is that of Protein Flattop from Homo sapiens (Human).